Reading from the N-terminus, the 528-residue chain is 2-isopropylmalate synthase (528 aa).

One can recognise a Pyruvate carboxyltransferase domain in the interval 12–279 (IRIFDTTLRD…DSSINTPRIV (268 aa)). 4 residues coordinate Mn(2+): aspartate 21, histidine 214, histidine 216, and asparagine 250. Positions 401-528 (RLASMTISDV…STDVPTPATA (128 aa)) are regulatory domain.

Belongs to the alpha-IPM synthase/homocitrate synthase family. LeuA type 1 subfamily. As to quaternary structure, homodimer. The cofactor is Mn(2+).

The protein localises to the cytoplasm. It catalyses the reaction 3-methyl-2-oxobutanoate + acetyl-CoA + H2O = (2S)-2-isopropylmalate + CoA + H(+). Its pathway is amino-acid biosynthesis; L-leucine biosynthesis; L-leucine from 3-methyl-2-oxobutanoate: step 1/4. In terms of biological role, catalyzes the condensation of the acetyl group of acetyl-CoA with 3-methyl-2-oxobutanoate (2-ketoisovalerate) to form 3-carboxy-3-hydroxy-4-methylpentanoate (2-isopropylmalate). The chain is 2-isopropylmalate synthase from Stenotrophomonas maltophilia (strain K279a).